Reading from the N-terminus, the 677-residue chain is Probable serine/threonine-protein kinase mkcF (677 aa).

Residues 1–58 (MLYLVATGDYKGPSENHLSFTKGQRIEFLERTENGFIKGKLDGKVGIFPSSLITIETR) enclose the SH3 domain. Residues 72-244 (TETKDDTGSI…SSSSSSTKRR (173 aa)) are disordered. The span at 79-94 (GSISSSTSTSTSSLTT) shows a compositional bias: low complexity. The span at 105 to 126 (GEQQPSTSTINGQSSSTSPILQ) shows a compositional bias: polar residues. Residues 127–146 (SNGTTNTTTSSTSNNNIGDN) are compositionally biased toward low complexity. The segment covering 158-174 (TTSNHSKSASRLSVASF) has biased composition (polar residues). A compositionally biased stretch (low complexity) spans 175–192 (STTTTATTTTTTTTTATS). The segment covering 209–224 (DKKSKDDDKSEKEGLY) has biased composition (basic and acidic residues). The segment covering 230 to 240 (SSSSSSSSSSS) has biased composition (low complexity). The Protein kinase domain occupies 401–646 (IKFTHMVGRG…VDKLMRHPFF (246 aa)). ATP is bound by residues 407-415 (VGRGQYGKV) and K428. D519 serves as the catalytic Proton acceptor.

The protein belongs to the protein kinase superfamily. Ser/Thr protein kinase family. STE20 subfamily. The cofactor is Mg(2+).

The enzyme catalyses L-seryl-[protein] + ATP = O-phospho-L-seryl-[protein] + ADP + H(+). It catalyses the reaction L-threonyl-[protein] + ATP = O-phospho-L-threonyl-[protein] + ADP + H(+). The sequence is that of Probable serine/threonine-protein kinase mkcF from Dictyostelium discoideum (Social amoeba).